Reading from the N-terminus, the 403-residue chain is Phosphopentomutase (403 aa).

Asp-13, Asp-298, His-303, Asp-339, His-340, and His-351 together coordinate Mn(2+).

Belongs to the phosphopentomutase family. Requires Mn(2+) as cofactor.

Its subcellular location is the cytoplasm. It carries out the reaction 2-deoxy-alpha-D-ribose 1-phosphate = 2-deoxy-D-ribose 5-phosphate. The enzyme catalyses alpha-D-ribose 1-phosphate = D-ribose 5-phosphate. The protein operates within carbohydrate degradation; 2-deoxy-D-ribose 1-phosphate degradation; D-glyceraldehyde 3-phosphate and acetaldehyde from 2-deoxy-alpha-D-ribose 1-phosphate: step 1/2. Isomerase that catalyzes the conversion of deoxy-ribose 1-phosphate (dRib-1-P) and ribose 1-phosphate (Rib-1-P) to deoxy-ribose 5-phosphate (dRib-5-P) and ribose 5-phosphate (Rib-5-P), respectively. This is Phosphopentomutase from Streptococcus pneumoniae serotype 4 (strain ATCC BAA-334 / TIGR4).